Consider the following 201-residue polypeptide: Peptidyl-prolyl cis-trans isomerase CYP19-4 (201 aa).

An N-terminal signal peptide occupies residues 1-23 (MAKASFILLGTLFLFGAIASIQA). The 164-residue stretch at 35 to 198 (YFDVEIDGKS…SKVVIADSGE (164 aa)) folds into the PPIase cyclophilin-type domain.

It belongs to the cyclophilin-type PPIase family. In terms of assembly, interacts with EMB30/GNOM. Ubiquitous, mostly in aerial organs (at protein level).

Its subcellular location is the cytoplasm. It localises to the membrane. It is found in the endoplasmic reticulum. The protein resides in the secreted. It carries out the reaction [protein]-peptidylproline (omega=180) = [protein]-peptidylproline (omega=0). Its activity is regulated as follows. Binds cyclosporin A (CsA). CsA mediates some of its effects via an inhibitory action on PPIase. In terms of biological role, PPIases accelerate the folding of proteins. It catalyzes the cis-trans isomerization of proline imidic peptide bonds in oligopeptides. May be involved during embryogenesis and organ development by regulating the folding of EMB30/GNOM, and thus, by modulating its activity. The sequence is that of Peptidyl-prolyl cis-trans isomerase CYP19-4 (CYP19-4) from Arabidopsis thaliana (Mouse-ear cress).